Here is a 360-residue protein sequence, read N- to C-terminus: tRNA-specific 2-thiouridylase MnmA (360 aa).

Residues 9 to 16 (AMSGGVDS) and Leu35 each bind ATP. The Nucleophile role is filled by Cys104. A disulfide bridge connects residues Cys104 and Cys197. ATP is bound at residue Gly128. Positions 147–149 (KDQ) are interaction with tRNA. Residue Cys197 is the Cysteine persulfide intermediate of the active site.

The protein belongs to the MnmA/TRMU family.

Its subcellular location is the cytoplasm. It catalyses the reaction S-sulfanyl-L-cysteinyl-[protein] + uridine(34) in tRNA + AH2 + ATP = 2-thiouridine(34) in tRNA + L-cysteinyl-[protein] + A + AMP + diphosphate + H(+). Catalyzes the 2-thiolation of uridine at the wobble position (U34) of tRNA, leading to the formation of s(2)U34. This is tRNA-specific 2-thiouridylase MnmA from Salinispora arenicola (strain CNS-205).